The chain runs to 447 residues: Tubulin beta-5 chain (447 aa).

Residues Gln-11, Glu-69, Ser-138, Gly-142, Thr-143, Gly-144, Asn-204, and Asn-226 each contribute to the GTP site. A Mg(2+)-binding site is contributed by Glu-69.

Belongs to the tubulin family. Dimer of alpha and beta chains. A typical microtubule is a hollow water-filled tube with an outer diameter of 25 nm and an inner diameter of 15 nM. Alpha-beta heterodimers associate head-to-tail to form protofilaments running lengthwise along the microtubule wall with the beta-tubulin subunit facing the microtubule plus end conferring a structural polarity. Microtubules usually have 13 protofilaments but different protofilament numbers can be found in some organisms and specialized cells. The cofactor is Mg(2+).

Its subcellular location is the cytoplasm. The protein localises to the cytoskeleton. Tubulin is the major constituent of microtubules, a cylinder consisting of laterally associated linear protofilaments composed of alpha- and beta-tubulin heterodimers. Microtubules grow by the addition of GTP-tubulin dimers to the microtubule end, where a stabilizing cap forms. Below the cap, tubulin dimers are in GDP-bound state, owing to GTPase activity of alpha-tubulin. The chain is Tubulin beta-5 chain (TUBB5) from Triticum aestivum (Wheat).